We begin with the raw amino-acid sequence, 988 residues long: Chitin synthase 1 (988 aa).

Positions 29–75 (QHHWPPSSGSSLGRAPSIPLSSSNPRSPIRPSTPSRVSTDWTRPPAP) are disordered. Residues 44–66 (PSIPLSSSNPRSPIRPSTPSRVS) show a composition bias toward low complexity. A run of 7 helical transmembrane segments spans residues 577 to 596 (WLNG…KQIW), 616 to 636 (FISL…FYFV), 656 to 676 (IFVI…ILSL), 732 to 752 (IFTN…LMSF), 764 to 784 (SAQY…YAFC), 864 to 884 (YVVA…SEAY), and 911 to 931 (AIGS…EGRI). The segment at 950-988 (AGLGSGFSESGKTGITSGSGMSGMSLSDVTSKISEKLAG) is disordered. Low complexity predominate over residues 957 to 976 (SESGKTGITSGSGMSGMSLS).

This sequence belongs to the chitin synthase family. Class II subfamily.

Its subcellular location is the cell membrane. It catalyses the reaction [(1-&gt;4)-N-acetyl-beta-D-glucosaminyl](n) + UDP-N-acetyl-alpha-D-glucosamine = [(1-&gt;4)-N-acetyl-beta-D-glucosaminyl](n+1) + UDP + H(+). Its function is as follows. Polymerizes chitin, a structural polymer of the cell wall and septum, by transferring the sugar moiety of UDP-GlcNAc to the non-reducing end of the growing chitin polymer. CHS1 mainly responsible for normal yeast cell reproductive growth. The sequence is that of Chitin synthase 1 from Exophiala dermatitidis (Black yeast-like fungus).